We begin with the raw amino-acid sequence, 342 residues long: Glycerol-1-phosphate dehydrogenase [NAD(P)+] (342 aa).

NAD(+) contacts are provided by residues 84–88 (GRPID) and 106–109 (TSAS). Asp111 is a substrate binding site. Ser115 is an NAD(+) binding site. Substrate is bound at residue Asp160. Zn(2+) contacts are provided by Asp160 and His241. Position 245 (His245) interacts with substrate. His260 contributes to the Zn(2+) binding site.

It belongs to the glycerol-1-phosphate dehydrogenase family. Homodimer. The cofactor is Zn(2+).

The protein resides in the cytoplasm. It catalyses the reaction sn-glycerol 1-phosphate + NAD(+) = dihydroxyacetone phosphate + NADH + H(+). The enzyme catalyses sn-glycerol 1-phosphate + NADP(+) = dihydroxyacetone phosphate + NADPH + H(+). Its pathway is membrane lipid metabolism; glycerophospholipid metabolism. Its function is as follows. Catalyzes the NAD(P)H-dependent reduction of dihydroxyacetonephosphate (DHAP or glycerone phosphate) to glycerol 1-phosphate (G1P). The G1P thus generated is used as the glycerophosphate backbone of phospholipids in the cellular membranes of Archaea. The chain is Glycerol-1-phosphate dehydrogenase [NAD(P)+] from Pyrobaculum islandicum (strain DSM 4184 / JCM 9189 / GEO3).